We begin with the raw amino-acid sequence, 106 residues long: Putative membrane protein insertion efficiency factor (106 aa).

This sequence belongs to the UPF0161 family.

The protein resides in the cell inner membrane. Functionally, could be involved in insertion of integral membrane proteins into the membrane. This Acinetobacter baumannii (strain SDF) protein is Putative membrane protein insertion efficiency factor.